We begin with the raw amino-acid sequence, 259 residues long: Hydroxyethylthiazole kinase 1 (259 aa).

Position 38 (methionine 38) interacts with substrate. Arginine 113 and serine 158 together coordinate ATP. Position 185 (glycine 185) interacts with substrate.

It belongs to the Thz kinase family. The cofactor is Mg(2+).

It catalyses the reaction 5-(2-hydroxyethyl)-4-methylthiazole + ATP = 4-methyl-5-(2-phosphooxyethyl)-thiazole + ADP + H(+). It participates in cofactor biosynthesis; thiamine diphosphate biosynthesis; 4-methyl-5-(2-phosphoethyl)-thiazole from 5-(2-hydroxyethyl)-4-methylthiazole: step 1/1. In terms of biological role, catalyzes the phosphorylation of the hydroxyl group of 4-methyl-5-beta-hydroxyethylthiazole (THZ). This is Hydroxyethylthiazole kinase 1 from Leuconostoc mesenteroides subsp. mesenteroides (strain ATCC 8293 / DSM 20343 / BCRC 11652 / CCM 1803 / JCM 6124 / NCDO 523 / NBRC 100496 / NCIMB 8023 / NCTC 12954 / NRRL B-1118 / 37Y).